Here is a 147-residue protein sequence, read N- to C-terminus: Hemoglobin subunit epsilon (147 aa).

The Globin domain occupies 3–147 (HFTAEEKVAI…VAIALGHKYH (145 aa)). Serine 14 and serine 51 each carry phosphoserine. The heme b site is built by histidine 64 and histidine 93.

This sequence belongs to the globin family. Heterotetramer of two alpha chains and two epsilon chains in early embryonic hemoglobin Gower-2; two zeta chains and two epsilon chains in early embryonic hemoglobin Gower-1. As to expression, red blood cells.

In terms of biological role, the epsilon chain is a beta-type chain of early mammalian embryonic hemoglobin. The polypeptide is Hemoglobin subunit epsilon (HBE1) (Cebus kaapori (Ka'apor capuchin)).